Consider the following 222-residue polypeptide: Ribosome maturation factor RimM (222 aa).

Residues 1–22 (MTERKQGAARPLNRPLVQPQGE) are disordered. A PRC barrel domain is found at 145–222 (EDEFYWVDLI…RIVVDWGLDY (78 aa)).

Belongs to the RimM family. Binds ribosomal protein uS19.

The protein resides in the cytoplasm. Its function is as follows. An accessory protein needed during the final step in the assembly of 30S ribosomal subunit, possibly for assembly of the head region. Essential for efficient processing of 16S rRNA. May be needed both before and after RbfA during the maturation of 16S rRNA. It has affinity for free ribosomal 30S subunits but not for 70S ribosomes. The sequence is that of Ribosome maturation factor RimM from Cupriavidus necator (strain ATCC 17699 / DSM 428 / KCTC 22496 / NCIMB 10442 / H16 / Stanier 337) (Ralstonia eutropha).